The following is a 46-amino-acid chain: Peroxidase 1 (46 aa).

The protein belongs to the peroxidase family. Classical plant (class III) peroxidase subfamily. The cofactor is heme b. Ca(2+) is required as a cofactor.

It localises to the secreted. The catalysed reaction is 2 a phenolic donor + H2O2 = 2 a phenolic radical donor + 2 H2O. Removal of H(2)O(2), oxidation of toxic reductants, biosynthesis and degradation of lignin, suberization, auxin catabolism, response to environmental stresses such as wounding, pathogen attack and oxidative stress. These functions might be dependent on each isozyme/isoform in each plant tissue. The chain is Peroxidase 1 from Catharanthus roseus (Madagascar periwinkle).